Here is a 328-residue protein sequence, read N- to C-terminus: Biotin synthase (328 aa).

The Radical SAM core domain occupies 48-278 (FTGNSASLCS…GKSLSVCGGR (231 aa)). The [4Fe-4S] cluster site is built by Cys-66, Cys-70, and Cys-73. Ser-143 and Cys-203 together coordinate [2Fe-2S] cluster.

This sequence belongs to the radical SAM superfamily. Biotin synthase family. In terms of assembly, homodimer. Requires [4Fe-4S] cluster as cofactor. It depends on [2Fe-2S] cluster as a cofactor.

It catalyses the reaction (4R,5S)-dethiobiotin + (sulfur carrier)-SH + 2 reduced [2Fe-2S]-[ferredoxin] + 2 S-adenosyl-L-methionine = (sulfur carrier)-H + biotin + 2 5'-deoxyadenosine + 2 L-methionine + 2 oxidized [2Fe-2S]-[ferredoxin]. Its pathway is cofactor biosynthesis; biotin biosynthesis; biotin from 7,8-diaminononanoate: step 2/2. Its function is as follows. Catalyzes the conversion of dethiobiotin (DTB) to biotin by the insertion of a sulfur atom into dethiobiotin via a radical-based mechanism. This is Biotin synthase from Pelobacter propionicus (strain DSM 2379 / NBRC 103807 / OttBd1).